The following is a 74-amino-acid chain: Small, acid-soluble spore protein Tlp (74 aa).

A disordered region spans residues 38–74; that stretch reads AEELSSKEKDELSSKNERRKESVDGLRSEIKDEADSQ.

The protein belongs to the Tlp family.

It is found in the spore core. The protein is Small, acid-soluble spore protein Tlp of Oceanobacillus iheyensis (strain DSM 14371 / CIP 107618 / JCM 11309 / KCTC 3954 / HTE831).